The primary structure comprises 595 residues: uncharacterized protein (595 aa).

The signal sequence occupies residues 1–23 (MLSLSSPPWLLLLVLFFFANGSA). 11 N-linked (GlcNAc...) asparagine glycosylation sites follow: asparagine 31, asparagine 63, asparagine 88, asparagine 112, asparagine 144, asparagine 187, asparagine 205, asparagine 389, asparagine 480, asparagine 492, and asparagine 506. Over residues 61-83 (LENQTASSSNLNTNNEASDEQTG) the composition is skewed to polar residues. Disordered stretches follow at residues 61 to 119 (LENQ…VSSL) and 141 to 164 (TALNGSGTPPEHQTIGQAPPTKGE). Residues 84–119 (NSNSNTSSHSRNINGLPSSNSNIDNANSNSSSVSSL) show a composition bias toward low complexity.

It localises to the secreted. This is an uncharacterized protein from Drosophila melanogaster (Fruit fly).